The sequence spans 170 residues: uncharacterized protein (170 aa).

3 consecutive transmembrane segments (helical) span residues 31-51 (ILAV…FYIF), 58-78 (LFLI…LLLF), and 133-153 (IDFI…MLLF).

To M.jannaschii MJ0554 and MJ0587.

It is found in the cell membrane. This is an uncharacterized protein from Methanocaldococcus jannaschii (strain ATCC 43067 / DSM 2661 / JAL-1 / JCM 10045 / NBRC 100440) (Methanococcus jannaschii).